Consider the following 780-residue polypeptide: Pendrin (780 aa).

Residues 1–87 are Cytoplasmic-facing; that stretch reads MAAPGGRSEP…YRVKEWLLSD (87 aa). Residues 88–108 form a helical membrane-spanning segment; it reads VISGVSTGLVATLQGMAYALL. Ala-109 is a topological domain (extracellular). A helical membrane pass occupies residues 110 to 130; it reads AVPVGYGLYSAFFPILTYFIF. Residues 131-135 lie on the Cytoplasmic side of the membrane; that stretch reads GTSRH. Residues 136–156 form a helical membrane-spanning segment; sequence ISVGPFPVVSLMVGSVVLSMA. Topologically, residues 157–191 are extracellular; that stretch reads PDEHFLVSSSNGTVLNTTMIDTAARDTARVLIASA. A helical transmembrane segment spans residues 192-212; that stretch reads LTLLVGIIQLIFGGLQIGFIV. Topologically, residues 213–218 are cytoplasmic; it reads RYLADP. Residues 219 to 239 traverse the membrane as a helical segment; the sequence is LVGGFTTAAAFQVLVSQLKIV. The Extracellular segment spans residues 240-263; the sequence is LNVSTKNYNGVLSIIYTLVEIFQN. The helical transmembrane segment at 264-284 threads the bilayer; it reads IGDTNLADFTAGLLTIVVCMA. The Cytoplasmic segment spans residues 285–295; the sequence is VKELNDRFRHK. The chain crosses the membrane as a helical span at residues 296-316; the sequence is IPVPIPIEVIVTIIATAISYG. Residues 317–344 are Extracellular-facing; that stretch reads ANLEKNYNAGIVKSIPRGFLPPELPPVS. A helical membrane pass occupies residues 345 to 365; the sequence is LFSEMLAASFSIAVVAYAIAV. The Cytoplasmic segment spans residues 366–384; that stretch reads SVGKVYATKYDYTIDGNQE. A helical membrane pass occupies residues 385 to 405; that stretch reads FIAFGISNIFSGFFSCFVATT. At 406–421 the chain is on the extracellular side; sequence ALSRTAVQESTGGKTQ. The helical transmembrane segment at 422-442 threads the bilayer; that stretch reads VAGIISAAIVMIAILALGKLL. Topologically, residues 443-448 are cytoplasmic; the sequence is EPLQKS. A helical membrane pass occupies residues 449–469; the sequence is VLAAVVIANLKGMFMQLCDIP. Over 470–486 the chain is Extracellular; it reads RLWRQNKIDAVIWVFTC. The helical transmembrane segment at 487-507 threads the bilayer; that stretch reads IVSIILGLDLGLLAGLIFGLL. Residues 508–780 are Cytoplasmic-facing; the sequence is TVVLRVQFPS…QDEAMRTLAS (273 aa). In terms of domain architecture, STAS spans 535-729; sequence NYKNIEEPQG…LTVHDAILYL (195 aa).

Belongs to the SLC26A/SulP transporter (TC 2.A.53) family. As to quaternary structure, interacts with IQGAP1; this interaction enhances the chloride-bicarbonate exchange activity of SLC26A4. In terms of tissue distribution, highly expressed in the kidney (at protein level). High expression in adult thyroid, lower expression in adult and fetal kidney and fetal brain. Not expressed in other tissues.

The protein localises to the cell membrane. It is found in the apical cell membrane. It catalyses the reaction chloride(in) = chloride(out). The catalysed reaction is iodide(out) = iodide(in). The enzyme catalyses hydrogencarbonate(in) + chloride(out) = hydrogencarbonate(out) + chloride(in). It carries out the reaction iodide(in) + hydrogencarbonate(out) = iodide(out) + hydrogencarbonate(in). It catalyses the reaction iodide(in) + chloride(out) = iodide(out) + chloride(in). The catalysed reaction is formate(in) + chloride(out) = formate(out) + chloride(in). Sodium-independent transporter of chloride and iodide. Mediates electroneutral chloride-bicarbonate, chloride-iodide and chloride-formate exchange with 1:1 stoichiometry. Mediates electroneutral iodide-bicarbonate exchange. This Homo sapiens (Human) protein is Pendrin (SLC26A4).